The chain runs to 376 residues: Protein STRICTOSIDINE SYNTHASE-LIKE 2 (376 aa).

Positions 1–23 (MMKLLLVVATSVALIFSVTDLSG) are cleaved as a signal peptide. N-linked (GlcNAc...) asparagine glycans are attached at residues Asn79 and Asn244.

This sequence belongs to the strictosidine synthase family.

It localises to the vacuole. The polypeptide is Protein STRICTOSIDINE SYNTHASE-LIKE 2 (Arabidopsis thaliana (Mouse-ear cress)).